Here is a 308-residue protein sequence, read N- to C-terminus: Acetaldehyde dehydrogenase (308 aa).

10-13 contacts NAD(+); sequence SGNI. Residue cysteine 128 is the Acyl-thioester intermediate of the active site. NAD(+)-binding positions include 159-167 and asparagine 285; that span reads SAGPGTRAN.

The protein belongs to the acetaldehyde dehydrogenase family.

The enzyme catalyses acetaldehyde + NAD(+) + CoA = acetyl-CoA + NADH + H(+). The protein is Acetaldehyde dehydrogenase of Salinispora tropica (strain ATCC BAA-916 / DSM 44818 / JCM 13857 / NBRC 105044 / CNB-440).